The chain runs to 782 residues: Endonuclease MutS2 (782 aa).

Gly-336–Thr-343 contacts ATP. Residues Leu-707–Lys-782 form the Smr domain.

The protein belongs to the DNA mismatch repair MutS family. MutS2 subfamily. As to quaternary structure, homodimer. Binds to stalled ribosomes, contacting rRNA.

Its function is as follows. Endonuclease that is involved in the suppression of homologous recombination and thus may have a key role in the control of bacterial genetic diversity. Acts as a ribosome collision sensor, splitting the ribosome into its 2 subunits. Detects stalled/collided 70S ribosomes which it binds and splits by an ATP-hydrolysis driven conformational change. Acts upstream of the ribosome quality control system (RQC), a ribosome-associated complex that mediates the extraction of incompletely synthesized nascent chains from stalled ribosomes and their subsequent degradation. Probably generates substrates for RQC. The polypeptide is Endonuclease MutS2 (Staphylococcus aureus (strain MRSA252)).